The sequence spans 249 residues: 1-(5-phosphoribosyl)-5-[(5-phosphoribosylamino)methylideneamino] imidazole-4-carboxamide isomerase (249 aa).

Asp-8 (proton acceptor) is an active-site residue. Asp-130 serves as the catalytic Proton donor.

The protein belongs to the HisA/HisF family.

It is found in the cytoplasm. It catalyses the reaction 1-(5-phospho-beta-D-ribosyl)-5-[(5-phospho-beta-D-ribosylamino)methylideneamino]imidazole-4-carboxamide = 5-[(5-phospho-1-deoxy-D-ribulos-1-ylimino)methylamino]-1-(5-phospho-beta-D-ribosyl)imidazole-4-carboxamide. Its pathway is amino-acid biosynthesis; L-histidine biosynthesis; L-histidine from 5-phospho-alpha-D-ribose 1-diphosphate: step 4/9. This chain is 1-(5-phosphoribosyl)-5-[(5-phosphoribosylamino)methylideneamino] imidazole-4-carboxamide isomerase, found in Nitrosococcus oceani (strain ATCC 19707 / BCRC 17464 / JCM 30415 / NCIMB 11848 / C-107).